The chain runs to 94 residues: Protein translocase subunit SecE (94 aa).

The segment at 1 to 32 (MTDAVGSIDMPDAQDEAPDSKKSRKGGKRGKK) is disordered. Positions 22–32 (KSRKGGKRGKK) are enriched in basic residues. The helical transmembrane segment at 65–85 (TVVIIFVVIMIGLVTLIDYGF) threads the bilayer.

Belongs to the SecE/SEC61-gamma family. In terms of assembly, component of the Sec protein translocase complex. Heterotrimer consisting of SecY, SecE and SecG subunits. The heterotrimers can form oligomers, although 1 heterotrimer is thought to be able to translocate proteins. Interacts with the ribosome. Interacts with SecDF, and other proteins may be involved. Interacts with SecA.

The protein resides in the cell membrane. In terms of biological role, essential subunit of the Sec protein translocation channel SecYEG. Clamps together the 2 halves of SecY. May contact the channel plug during translocation. In Streptomyces lividans, this protein is Protein translocase subunit SecE.